A 68-amino-acid chain; its full sequence is Protein SlyX homolog (68 aa).

The protein belongs to the SlyX family.

The chain is Protein SlyX homolog from Pseudomonas fluorescens (strain Pf0-1).